Reading from the N-terminus, the 278-residue chain is Serine/arginine-rich splicing factor SR34B (278 aa).

The region spanning 7 to 82 (RTIYVGNLPG…HHLRVELAHG (76 aa)) is the RRM 1 domain. The span at 81-91 (HGGRRSSHDAR) shows a compositional bias: basic and acidic residues. 2 disordered regions span residues 81–121 (HGGR…SEYR) and 192–263 (EYDS…RSLS). Gly residues predominate over residues 95–107 (SGRGRGGRGGGDG). 2 stretches are compositionally biased toward basic and acidic residues: residues 108 to 120 (GGRE…RSEY) and 192 to 201 (EYDSRRDSRS). The RRM 2 domain occupies 120-195 (YRVVVSGLPS…EYVRVREYDS (76 aa)). Phosphoserine occurs at positions 201, 203, 225, 231, 233, 242, 250, 259, and 263. Over residues 207–243 (SYSKSRSRGRSPSRSRSRSRSRSKSRSPKAKSLRRSP) the composition is skewed to basic residues.

The protein belongs to the splicing factor SR family. SR subfamily. In terms of assembly, component of the spliceosome.

Its subcellular location is the nucleus speckle. It localises to the nucleus. It is found in the nucleoplasm. Probably involved in intron recognition and spliceosome assembly. The sequence is that of Serine/arginine-rich splicing factor SR34B (SR34B) from Arabidopsis thaliana (Mouse-ear cress).